A 441-amino-acid polypeptide reads, in one-letter code: FBD-associated F-box protein At5g18780 (441 aa).

Residues 10-56 (EDRISILPEPLLCHILSFLRTKDSVRTSVLSSRWRDLWLWVPRLDLD) enclose the F-box domain. In terms of domain architecture, FBD spans 366 to 410 (LPRCLISSLASVDIESPITDKATELKLVSYLLENSTTLKKLVLRL).

This Arabidopsis thaliana (Mouse-ear cress) protein is FBD-associated F-box protein At5g18780.